A 477-amino-acid chain; its full sequence is Ribulose bisphosphate carboxylase large chain (477 aa).

The propeptide occupies 1-2 (MS). Pro-3 carries the post-translational modification N-acetylproline. At Lys-14 the chain carries N6,N6,N6-trimethyllysine. Substrate is bound by residues Asn-123 and Thr-173. Lys-175 functions as the Proton acceptor in the catalytic mechanism. Lys-177 is a binding site for substrate. 3 residues coordinate Mg(2+): Lys-201, Asp-203, and Glu-204. Lys-201 carries the post-translational modification N6-carboxylysine. His-294 functions as the Proton acceptor in the catalytic mechanism. The substrate site is built by Arg-295, His-327, and Ser-379.

The protein belongs to the RuBisCO large chain family. Type I subfamily. As to quaternary structure, heterohexadecamer of 8 large chains and 8 small chains; disulfide-linked. The disulfide link is formed within the large subunit homodimers. Requires Mg(2+) as cofactor. In terms of processing, the disulfide bond which can form in the large chain dimeric partners within the hexadecamer appears to be associated with oxidative stress and protein turnover.

It localises to the plastid. The protein localises to the chloroplast. It carries out the reaction 2 (2R)-3-phosphoglycerate + 2 H(+) = D-ribulose 1,5-bisphosphate + CO2 + H2O. The catalysed reaction is D-ribulose 1,5-bisphosphate + O2 = 2-phosphoglycolate + (2R)-3-phosphoglycerate + 2 H(+). RuBisCO catalyzes two reactions: the carboxylation of D-ribulose 1,5-bisphosphate, the primary event in carbon dioxide fixation, as well as the oxidative fragmentation of the pentose substrate in the photorespiration process. Both reactions occur simultaneously and in competition at the same active site. The chain is Ribulose bisphosphate carboxylase large chain from Nicotiana tomentosiformis (Tobacco).